We begin with the raw amino-acid sequence, 268 residues long: GTP cyclohydrolase FolE2 (268 aa).

Belongs to the GTP cyclohydrolase IV family.

The catalysed reaction is GTP + H2O = 7,8-dihydroneopterin 3'-triphosphate + formate + H(+). The protein operates within cofactor biosynthesis; 7,8-dihydroneopterin triphosphate biosynthesis; 7,8-dihydroneopterin triphosphate from GTP: step 1/1. In terms of biological role, converts GTP to 7,8-dihydroneopterin triphosphate. This chain is GTP cyclohydrolase FolE2, found in Janthinobacterium sp. (strain Marseille) (Minibacterium massiliensis).